The primary structure comprises 679 residues: Stress-70 protein, mitochondrial (679 aa).

The N-terminal 46 residues, 1-46 (MISASRAAAARLVGTTASRSPAAARHQDGWNGLSHEAFRFVSRRDY), are a transit peptide targeting the mitochondrion. An interaction with NFS1 region spans residues 1–432 (MISASRAAAA…IQGGVLAGDV (432 aa)). Residues threonine 63 and asparagine 64 each coordinate ADP. The nucleotide-binding domain (NBD) stretch occupies residues 63–431 (TNSCVAVMEG…AIQGGVLAGD (369 aa)). Lysine 76 is modified (N6-acetyllysine). Threonine 87 is modified (phosphothreonine). 2 positions are modified to N6-acetyllysine; alternate: lysine 135 and lysine 138. Residues lysine 135 and lysine 138 each carry the N6-succinyllysine; alternate modification. Lysine 143 bears the N6-acetyllysine mark. At lysine 206 the chain carries N6-acetyllysine; alternate. The residue at position 206 (lysine 206) is an N6-succinyllysine; alternate. An N6-malonyllysine; alternate modification is found at lysine 206. N6-acetyllysine occurs at positions 234 and 288. Lysine 300 carries the post-translational modification N6-acetyllysine; alternate. Lysine 300 is subject to N6-succinyllysine; alternate. ADP contacts are provided by glutamate 313, lysine 316, and serine 320. Lysine 360 is modified (N6-acetyllysine; alternate). Residue lysine 360 is modified to N6-succinyllysine; alternate. Lysine 368 carries the post-translational modification N6-succinyllysine. ADP contacts are provided by glycine 388 and arginine 391. Lysine 394 carries the N6-succinyllysine modification. Serine 408 carries the phosphoserine modification. The tract at residues 432-441 (VTDVLLLDVT) is interdomain linker. Residues 432–679 (VTDVLLLDVT…QKEDQKEEKQ (248 aa)) are interaction with FXN and ISCU. A substrate-binding domain (SBD) region spans residues 442–679 (PLSLGIETLG…QKEDQKEEKQ (238 aa)). Arginine 513 carries the omega-N-methylarginine modification. N6-acetyllysine; alternate is present on residues lysine 567 and lysine 600. N6-succinyllysine; alternate occurs at positions 567 and 600. Lysine 610 is modified (N6-succinyllysine). At lysine 612 the chain carries N6-acetyllysine. Lysine 646 carries the post-translational modification N6-acetyllysine; alternate. At lysine 646 the chain carries N6-succinyllysine; alternate. The interval 655 to 679 (MASEREGSGSSSTGEQKEDQKEEKQ) is disordered. Residues 669–679 (EQKEDQKEEKQ) are compositionally biased toward basic and acidic residues.

Belongs to the heat shock protein 70 family. As to quaternary structure, interacts strongly with the intermediate form of FXN and weakly with its mature form. Interacts with HSCB. Associates with the mitochondrial contact site and cristae organizing system (MICOS) complex, composed of at least MICOS10/MIC10, CHCHD3/MIC19, CHCHD6/MIC25, APOOL/MIC27, IMMT/MIC60, APOO/MIC23/MIC26 and QIL1/MIC13. This complex was also known under the names MINOS or MitOS complex. The MICOS complex associates with mitochondrial outer membrane proteins SAMM50, MTX1, MTX2 and DNAJC11, mitochondrial inner membrane protein TMEM11 and with HSPA9. Interacts with DNLZ, the interaction is required to prevent self-aggregation. Interacts with TESPA1. Interacts with PDPN. Interacts with NFU1, NFS1 and ISCU. Interacts with TP53; the interaction promotes TP53 degradation. Interacts (via SBD domain) with UBXN2A; the interaction with UBXN2A inhibits HSPA9 interaction with and degradation of TP53, thereby promotes TP53 translocation to the nucleus. Interacts with ITPR1 AND VDAC1; this interaction couples ITPR1 to VDAC1. Component of the TIM23 mitochondrial inner membrane pre-sequence translocase complex.

It is found in the mitochondrion. The protein resides in the nucleus. Its subcellular location is the nucleolus. It localises to the cytoplasm. The protein localises to the mitochondrion matrix. It catalyses the reaction ATP + H2O = ADP + phosphate + H(+). The chaperone activity is regulated by ATP-induced allosteric coupling of the nucleotide-binding (NBD) and substrate-binding (SBD) domains. ATP binding in the nucleotide-binding pocket (NBP) leads to a conformational change in the NBD, which is transferred through the interdomain linker (IDL) to the substrate-binding domain (SBD). This elicits a reduced substrate affinity and a faster substrate exchange rate. Upon hydrolysis of ATP to ADP, the protein undergoes a conformational change that increases its affinity for substrate proteins. It cycles through repeated phases of ATP hydrolysis and nucleotide exchange, facilitating repeated cycles of substrate binding and release. Functions in collaboration with co-chaperones. Functions with the co-chaperone, DNLZ, to maintain solubility and regulate ATP hydrolysis. Nucleotide exchange factors, GRPEL1 and GRPEL2, accelerate nucleotide exchange. Functionally, mitochondrial chaperone that plays a key role in mitochondrial protein import, folding, and assembly. Plays an essential role in the protein quality control system, the correct folding of proteins, the re-folding of misfolded proteins, and the targeting of proteins for subsequent degradation. These processes are achieved through cycles of ATP binding, ATP hydrolysis, and ADP release, mediated by co-chaperones. In mitochondria, it associates with the TIM (translocase of the inner membrane) protein complex to assist in the import and folding of mitochondrial proteins. Plays an important role in mitochondrial iron-sulfur cluster (ISC) biogenesis, interacts with and stabilizes ISC cluster assembly proteins FXN, NFU1, NFS1 and ISCU. Regulates erythropoiesis via stabilization of ISC assembly. Regulates mitochondrial calcium-dependent apoptosis by coupling two calcium channels, ITPR1 and VDAC1, at the mitochondria-associated endoplasmic reticulum (ER) membrane to facilitate calcium transport from the ER lumen to the mitochondria intermembrane space, providing calcium for the downstream calcium channel MCU, which releases it into the mitochondrial matrix. Although primarily located in the mitochondria, it is also found in other cellular compartments. In the cytosol, it associates with proteins involved in signaling, apoptosis, or senescence. It may play a role in cell cycle regulation via its interaction with and promotion of degradation of TP53. May play a role in the control of cell proliferation and cellular aging. Protects against reactive oxygen species (ROS). Extracellular HSPA9 plays a cytoprotective role by preventing cell lysis following immune attack by the membrane attack complex by disrupting formation of the complex. In Rattus norvegicus (Rat), this protein is Stress-70 protein, mitochondrial.